A 79-amino-acid chain; its full sequence is Small ribosomal subunit protein bS18 (79 aa).

It belongs to the bacterial ribosomal protein bS18 family. Part of the 30S ribosomal subunit. Forms a tight heterodimer with protein bS6.

In terms of biological role, binds as a heterodimer with protein bS6 to the central domain of the 16S rRNA, where it helps stabilize the platform of the 30S subunit. This chain is Small ribosomal subunit protein bS18, found in Streptococcus pyogenes serotype M5 (strain Manfredo).